An 89-amino-acid polypeptide reads, in one-letter code: Small ribosomal subunit protein uS14B (89 aa).

A disordered region spans residues 38-61; it reads KLPKDAHPSRLKLRDQTDGRPRGY. The segment covering 39–58 has biased composition (basic and acidic residues); it reads LPKDAHPSRLKLRDQTDGRP.

The protein belongs to the universal ribosomal protein uS14 family. In terms of assembly, part of the 30S ribosomal subunit. Contacts proteins S3 and S10.

Its function is as follows. Binds 16S rRNA, required for the assembly of 30S particles and may also be responsible for determining the conformation of the 16S rRNA at the A site. The protein is Small ribosomal subunit protein uS14B of Enterococcus faecalis (strain ATCC 700802 / V583).